A 321-amino-acid chain; its full sequence is MHKYQTHWVESSEIKILSDKGKKHIALVAGGMSAEREVSLISAEGVGKALIEAGYKVTFIDMGADITVKLHEIKPDIVFNCLHGTYGEDGCLPGLLNIMRIPYTHSGVLASSLAFDKVHSRSWFLTNNINMAESIVISKGDNIKTDPIKRPYVIKPFTQGSSIGVEVIFEEDDFNFANYDFPYGDEVIIEKYIKGRELQVAILNGKALGALEIKLLKNRFYDYETKYTEGFAEHLCPAPLPTDIYDKLLKESEKIYNTMNCKGAARVEFILEDGTNKLYALEINTHPGMTPLSIVPEIAAYHGIDFVNLIEEILKTASFES.

Positions 121 to 315 constitute an ATP-grasp domain; sequence RSWFLTNNIN…FVNLIEEILK (195 aa). 148 to 199 is an ATP binding site; sequence IKRPYVIKPFTQGSSIGVEVIFEEDDFNFANYDFPYGDEVIIEKYIKGRELQ. The Mg(2+) site is built by Glu-268, Glu-282, and Asn-284.

It belongs to the D-alanine--D-alanine ligase family. Mg(2+) is required as a cofactor. The cofactor is Mn(2+).

Its subcellular location is the cytoplasm. The catalysed reaction is 2 D-alanine + ATP = D-alanyl-D-alanine + ADP + phosphate + H(+). It functions in the pathway cell wall biogenesis; peptidoglycan biosynthesis. Its function is as follows. Cell wall formation. In Rickettsia bellii (strain RML369-C), this protein is D-alanine--D-alanine ligase.